A 495-amino-acid chain; its full sequence is Ribosome biogenesis protein YTM1 (495 aa).

The tract at residues 15-97 is ubiquitin-like (UBL) domain; the sequence is VKVIFTTTEP…ETTLTLQYVR (83 aa). WD repeat units lie at residues 129–168, 175–213, 223–262, 264–295, 296–337, 386–426, and 458–495; these read WSSA…IATS, GHTA…HFTG, GHTG…APEP, ASLL…LWSI, HTAP…STLT, GHAN…PATK, and GDGC…TEQK.

Belongs to the WD repeat WDR12/YTM1 family. In terms of assembly, component of the NOP7 complex, composed of ERB1, NOP7 and YTM1. The complex is held together by ERB1, which interacts with NOP7 via its N-terminal domain and with YTM1 via a high-affinity interaction between the seven-bladed beta-propeller domains of the 2 proteins. The NOP7 complex associates with the 66S pre-ribosome. Interacts (via UBL domain) with MDN1 (via VWFA/MIDAS domain).

Its subcellular location is the nucleus. The protein resides in the nucleolus. It localises to the nucleoplasm. Its function is as follows. Component of the NOP7 complex, which is required for maturation of the 25S and 5.8S ribosomal RNAs and formation of the 60S ribosome. The polypeptide is Ribosome biogenesis protein YTM1 (Chaetomium thermophilum (strain DSM 1495 / CBS 144.50 / IMI 039719) (Thermochaetoides thermophila)).